The primary structure comprises 129 residues: Small ribosomal subunit protein uS11 (129 aa).

It belongs to the universal ribosomal protein uS11 family. In terms of assembly, part of the 30S ribosomal subunit. Interacts with proteins S7 and S18. Binds to IF-3.

In terms of biological role, located on the platform of the 30S subunit, it bridges several disparate RNA helices of the 16S rRNA. Forms part of the Shine-Dalgarno cleft in the 70S ribosome. This is Small ribosomal subunit protein uS11 from Sinorhizobium medicae (strain WSM419) (Ensifer medicae).